Consider the following 191-residue polypeptide: uncharacterized protein (191 aa).

A Fe2OG dioxygenase domain is found at 87 to 184; the sequence is EFDSALIFHY…RIAITFRQMG (98 aa).

This is an uncharacterized protein from Acanthamoeba polyphaga mimivirus (APMV).